The chain runs to 59 residues: Large ribosomal subunit protein uL30 (59 aa).

The protein belongs to the universal ribosomal protein uL30 family. In terms of assembly, part of the 50S ribosomal subunit.

The sequence is that of Large ribosomal subunit protein uL30 from Alkaliphilus oremlandii (strain OhILAs) (Clostridium oremlandii (strain OhILAs)).